Here is a 194-residue protein sequence, read N- to C-terminus: Imidazoleglycerol-phosphate dehydratase (194 aa).

This sequence belongs to the imidazoleglycerol-phosphate dehydratase family.

It is found in the cytoplasm. The catalysed reaction is D-erythro-1-(imidazol-4-yl)glycerol 3-phosphate = 3-(imidazol-4-yl)-2-oxopropyl phosphate + H2O. It participates in amino-acid biosynthesis; L-histidine biosynthesis; L-histidine from 5-phospho-alpha-D-ribose 1-diphosphate: step 6/9. The protein is Imidazoleglycerol-phosphate dehydratase of Listeria monocytogenes serotype 4b (strain F2365).